We begin with the raw amino-acid sequence, 115 residues long: C-type natriuretic peptide prohormone (115 aa).

The disordered stretch occupies residues 24 to 49; sequence PSDELNNEAEEMSPAASLPELNADQS. Cysteines 99 and 115 form a disulfide.

The protein belongs to the natriuretic peptide family. In terms of tissue distribution, CNP-115 is differentially processed to produce CNP-38 and CNP-39 in the heart and CNP-22 in the brain.

It localises to the secreted. In terms of biological role, hormone which may be vasoactive and natriuretic. Has a cGMP-stimulating activity. This is C-type natriuretic peptide prohormone from Scyliorhinus canicula (Small-spotted catshark).